Here is a 468-residue protein sequence, read N- to C-terminus: Lysosomal dipeptide transporter MFSD1 (468 aa).

Positions Met1 to Ala25 are disordered. The Dileucine internalization motif signature appears at Leu11–Leu12. A run of 12 helical transmembrane segments spans residues Leu42–Cys62, Leu86–Ile106, Thr116–Phe136, Ala138–Val158, Leu173–Leu194, Leu218–Leu238, Trp270–Val290, Ala307–Val327, Ile334–Thr354, Leu364–Val384, Phe395–Leu415, and Leu421–Leu441.

Belongs to the major facilitator superfamily. As to quaternary structure, homodimer. Interacts with lysosomal protein GLMP (via lumenal domain); the interaction starts while both proteins are still in the endoplasmic reticulum and is required for stabilization of MFSD1 in lysosomes but has no direct effect on its targeting to lysosomes or transporter activity.

It is found in the lysosome membrane. It catalyses the reaction L-alpha-aminoacyl-L-arginine(out) = L-alpha-aminoacyl-L-arginine(in). The enzyme catalyses L-arginyl-L-alpha-amino acid(out) = L-arginyl-L-alpha-amino acid(in). It carries out the reaction L-arginyl-glycine(out) = L-arginyl-glycine(in). The catalysed reaction is L-alpha-aminoacyl-L-lysine(out) = L-alpha-aminoacyl-L-lysine(in). It catalyses the reaction L-aspartyl-L-lysine(out) = L-aspartyl-L-lysine(in). The enzyme catalyses L-alanyl-L-lysine(out) = L-alanyl-L-lysine(in). It carries out the reaction L-lysyl-L-alpha-amino acid(out) = L-lysyl-L-alpha-amino acid(in). The catalysed reaction is L-lysyl-L-alanine(out) = L-lysyl-L-alanine(in). It catalyses the reaction L-lysyl-L-lysine(out) = L-lysyl-L-lysine(in). The enzyme catalyses L-lysyl-glycine(out) = L-lysyl-glycine(in). It carries out the reaction L-alpha-aminoacyl-L-histidine(out) = L-alpha-aminoacyl-L-histidine(in). The catalysed reaction is L-histidyl-L-alpha-amino acid(out) = L-histidyl-L-alpha-amino acid(in). It catalyses the reaction L-histidyl-glycine(out) = L-histidyl-glycine(in). In terms of biological role, lysosomal dipeptide uniporter that selectively exports lysine, arginine or histidine-containing dipeptides with a net positive charge from the lysosome lumen into the cytosol. Could play a role in a specific type of protein O-glycosylation indirectly regulating macrophages migration and tissue invasion. Also essential for liver homeostasis. The protein is Lysosomal dipeptide transporter MFSD1 of Bos taurus (Bovine).